The primary structure comprises 407 residues: Imidazolonepropionase (407 aa).

Residues His68 and His70 each contribute to the Fe(3+) site. The Zn(2+) site is built by His68 and His70. Positions 77, 140, and 173 each coordinate 4-imidazolone-5-propanoate. Residue Tyr140 participates in N-formimidoyl-L-glutamate binding. His238 is a Fe(3+) binding site. His238 is a binding site for Zn(2+). Residue Gln241 coordinates 4-imidazolone-5-propanoate. Position 313 (Asp313) interacts with Fe(3+). Asp313 serves as a coordination point for Zn(2+). N-formimidoyl-L-glutamate contacts are provided by Asn315 and Gly317. Thr318 lines the 4-imidazolone-5-propanoate pocket.

The protein belongs to the metallo-dependent hydrolases superfamily. HutI family. Zn(2+) is required as a cofactor. Fe(3+) serves as cofactor.

It localises to the cytoplasm. It carries out the reaction 4-imidazolone-5-propanoate + H2O = N-formimidoyl-L-glutamate. The protein operates within amino-acid degradation; L-histidine degradation into L-glutamate; N-formimidoyl-L-glutamate from L-histidine: step 3/3. Its function is as follows. Catalyzes the hydrolytic cleavage of the carbon-nitrogen bond in imidazolone-5-propanoate to yield N-formimidoyl-L-glutamate. It is the third step in the universal histidine degradation pathway. The chain is Imidazolonepropionase from Burkholderia mallei (strain ATCC 23344).